Here is a 141-residue protein sequence, read N- to C-terminus: Galactose-6-phosphate isomerase subunit LacA 1 (141 aa).

It belongs to the LacAB/RpiB family. In terms of assembly, heteromultimeric protein consisting of LacA and LacB.

The enzyme catalyses aldehydo-D-galactose 6-phosphate = keto-D-tagatose 6-phosphate. Its pathway is carbohydrate metabolism; D-galactose 6-phosphate degradation; D-tagatose 6-phosphate from D-galactose 6-phosphate: step 1/1. The protein is Galactose-6-phosphate isomerase subunit LacA 1 of Streptococcus pyogenes serotype M18 (strain MGAS8232).